The chain runs to 348 residues: Rhodopsin (348 aa).

N-acetylmethionine is present on M1. Over 1-36 the chain is Extracellular; sequence MNGTEGPNFYVPFSNKTGVVRSPFEYPQYYLAEPWQ. 2 N-linked (GlcNAc...) asparagine glycosylation sites follow: N2 and N15. The helical transmembrane segment at 37-61 threads the bilayer; sequence FSMLAAYMFLLIVLGFPINFLTLYV. Over 62-73 the chain is Cytoplasmic; sequence TVQHKNVRTPLN. Residues 74-96 traverse the membrane as a helical segment; sequence YILLNLAVANHFMVFGGFTTTLY. Over 97–110 the chain is Extracellular; it reads TSLHGYFVFGSTGC. The cysteines at positions 110 and 187 are disulfide-linked. The chain crosses the membrane as a helical span at residues 111–133; the sequence is NLEGFFATLGGEIALWSLVVLAI. The 'Ionic lock' involved in activated form stabilization motif lies at 134–136; the sequence is ERY. Residues 134–152 are Cytoplasmic-facing; the sequence is ERYVVVCKPMSNFRFGENH. A helical transmembrane segment spans residues 153-173; sequence AIMGVAFTWVMALACAAPPLV. At 174-202 the chain is on the extracellular side; the sequence is GWSRYIPEGMQCSCGIDYYTLKPEVNNES. E201 lines the Zn(2+) pocket. Residues 203-224 form a helical membrane-spanning segment; sequence FVIYMFVVHFTIPMTIIFFCYG. The Cytoplasmic segment spans residues 225–252; that stretch reads QLVFTVKEAAAQQQESATTQKAEKEVTR. Residues 253–274 traverse the membrane as a helical segment; that stretch reads MVIIMVIAFLICWVPYASVAFY. The Extracellular portion of the chain corresponds to 275 to 286; sequence IFTHQGSDFGPI. Q279 serves as a coordination point for Zn(2+). A helical membrane pass occupies residues 287–308; that stretch reads LMTLPAFFAKSSAIYNPVIYIM. K296 is subject to N6-(retinylidene)lysine. The Cytoplasmic portion of the chain corresponds to 309–348; sequence MNKQFRNCMLTTICCGKNPFGEEEGSTTASKTETSQVAPA. 2 S-palmitoyl cysteine lipidation sites follow: C322 and C323. The interaction with SAG stretch occupies residues 330–348; the sequence is EEEGSTTASKTETSQVAPA. S334 bears the Phosphoserine mark. Residues T335 and T336 each carry the phosphothreonine modification. At S338 the chain carries Phosphoserine. T340 and T342 each carry phosphothreonine. A Phosphoserine modification is found at S343.

The protein belongs to the G-protein coupled receptor 1 family. Opsin subfamily. As to quaternary structure, homodimer. May form a complex composed of RHO, GRK1 and RCVRN in a Ca(2+)-dependent manner; RCVRN prevents the interaction between GRK1 and RHO. Interacts with GRK1. Interacts (phosphorylated form) with SAG. Interacts with GNAT1. Interacts with GNAT3. SAG and G-proteins compete for a common binding site. Interacts with PRCD; the interaction promotes PRCD stability. Forms a complex with ASAP1 and ARF4. Forms a complex with ASAP1, RAB11A, Rabin8/RAB3IP, ARF4 and RAB11FIP3; the complex regulates Golgi-to-cilia rhodopsin/RHO transport in photoreceptors. Post-translationally, phosphorylated on some or all of the serine and threonine residues present in the C-terminal region. Contains one covalently linked retinal chromophore. Upon light absorption, the covalently bound 11-cis-retinal is converted to all-trans-retinal. After hydrolysis of the Schiff base and release of the covalently bound all-trans-retinal, active rhodopsin is regenerated by binding of a fresh molecule of 11-cis-retinal.

Its subcellular location is the membrane. It localises to the cell projection. The protein localises to the cilium. It is found in the photoreceptor outer segment. Functionally, photoreceptor required for image-forming vision at low light intensity. Required for photoreceptor cell viability after birth. Light-induced isomerization of 11-cis to all-trans retinal triggers a conformational change that activates signaling via G-proteins. Subsequent receptor phosphorylation mediates displacement of the bound G-protein alpha subunit by the arrestin SAG and terminates signaling. This chain is Rhodopsin (RHO), found in Loxodonta africana (African elephant).